The chain runs to 66 residues: Moricin-1 (66 aa).

A signal peptide spans 1–24; the sequence is MNILKFFFVFIVAMSLVSCSTAAP.

As to expression, expressed in fat body and to a lesser extent in hemocyte and Malpighian tubules.

It is found in the secreted. Its function is as follows. Has antibacterial activity against Gram-positive and Gram-negative bacteria. Probably acts by disturbing membrane functions with its amphipathic structure. The sequence is that of Moricin-1 (MOR1) from Bombyx mori (Silk moth).